A 401-amino-acid polypeptide reads, in one-letter code: MRNIIVEPLNQTPIEDQKVEIVERKGIGHPDSISDGIAESVSRALCNAYLDRFGAIMHHNTDEVQITAGESAPQFGGGEVIKPIEILLTGRGIAEVDGEKIGLDRIAISAAKEYLRDNIINLDVETCTVVECKIGHGSGDLRDVFARKGRAPLSNDTSFGVGFAPFSETERIVMEAENLLNSPEFKKKYPAVGEDIKVMGLRENDNITLTVACAMVDRYVSDLEEYLEIKNVVKDEVFKLASGITERNLEVFVNTADRCEDDEPSVYITVTGTSAEMGDDGSVGRGNRANGLITPNRPMSMEATSGKNPINHVGKIYNLLSNQMAADIVESIEGVKQVHIMILSQIGKPIDHPKAATAQVILEDGYTMDDITGKVSGVMDAWLEDIPSITEMLVKGQLRTF.

Glycine 135–aspartate 140 contributes to the ATP binding site.

This sequence belongs to the AdoMet synthase 2 family. The cofactor is Mg(2+).

The catalysed reaction is L-methionine + ATP + H2O = S-adenosyl-L-methionine + phosphate + diphosphate. Its pathway is amino-acid biosynthesis; S-adenosyl-L-methionine biosynthesis; S-adenosyl-L-methionine from L-methionine: step 1/1. Catalyzes the formation of S-adenosylmethionine from methionine and ATP. The protein is S-adenosylmethionine synthase (mat) of Methanothermobacter marburgensis (strain ATCC BAA-927 / DSM 2133 / JCM 14651 / NBRC 100331 / OCM 82 / Marburg) (Methanobacterium thermoautotrophicum).